Here is a 571-residue protein sequence, read N- to C-terminus: MTDTNKLKDFRHRSSVYDSMVKSPNRAMLRATGMTDDSFEKPIVGVISTWAENTPCNIHLHDFGKLAKEGVKEAGAWPVQYGTITVADGIAMGTPGMRFSLTSRDIIADSIEAAMGGHNVDAFVAIGGCDKNMPGSMIAIANMDIPAVFAYGGTIAPGNLNGKDIDLVSVFEGIGKWNNGDLTAEEVRQIECNACPGPGGCGGMYTANTMATAIEVMGMSIPGSSSHPAESPEKKADIEEAGRAVVRMLELGIKPSDIMTREAFEDAITVTMALGGSTNATLHLLAIAHAANVDLTLEDFNDFQERVPHLADLKPSGKYVFQDLYNVGGVPAVMKYLLKNGFLHGDRITCTGKTVAENLKNFADLTPGQDVIMPLENPKRADGPLIILKGNLAPEGAVAKVSGVKVRNHTGPAKVFDSEEEAIEAVLTDEIVDGDVVVVRYVGPKGGPGMPEMLSLSSMIVGKGQGDKVALLTDGRFSGGTYGLVVGHIAPEAQDGGPIAYLRTGDLVTVDQDTKEITMHVSDQEIEERKKTTVIPPLYSRGVLGKYAHTVSSASKGAVTDFWRPERTGKK.

Cys56 lines the [2Fe-2S] cluster pocket. Residue Asp88 coordinates Mg(2+). Residue Cys129 participates in [2Fe-2S] cluster binding. Mg(2+) contacts are provided by Asp130 and Lys131. Position 131 is an N6-carboxylysine (Lys131). [2Fe-2S] cluster is bound at residue Cys201. Residue Glu452 coordinates Mg(2+). Ser478 functions as the Proton acceptor in the catalytic mechanism.

Belongs to the IlvD/Edd family. As to quaternary structure, homodimer. The cofactor is [2Fe-2S] cluster. It depends on Mg(2+) as a cofactor.

It carries out the reaction (2R)-2,3-dihydroxy-3-methylbutanoate = 3-methyl-2-oxobutanoate + H2O. It catalyses the reaction (2R,3R)-2,3-dihydroxy-3-methylpentanoate = (S)-3-methyl-2-oxopentanoate + H2O. Its pathway is amino-acid biosynthesis; L-isoleucine biosynthesis; L-isoleucine from 2-oxobutanoate: step 3/4. It functions in the pathway amino-acid biosynthesis; L-valine biosynthesis; L-valine from pyruvate: step 3/4. Functionally, functions in the biosynthesis of branched-chain amino acids. Catalyzes the dehydration of (2R,3R)-2,3-dihydroxy-3-methylpentanoate (2,3-dihydroxy-3-methylvalerate) into 2-oxo-3-methylpentanoate (2-oxo-3-methylvalerate) and of (2R)-2,3-dihydroxy-3-methylbutanoate (2,3-dihydroxyisovalerate) into 2-oxo-3-methylbutanoate (2-oxoisovalerate), the penultimate precursor to L-isoleucine and L-valine, respectively. This Streptococcus suis (strain 98HAH33) protein is Dihydroxy-acid dehydratase.